Reading from the N-terminus, the 179-residue chain is Large ribosomal subunit protein uL5 (179 aa).

This sequence belongs to the universal ribosomal protein uL5 family. In terms of assembly, part of the 50S ribosomal subunit; part of the 5S rRNA/L5/L18/L25 subcomplex. Contacts the 5S rRNA and the P site tRNA. Forms a bridge to the 30S subunit in the 70S ribosome.

Its function is as follows. This is one of the proteins that bind and probably mediate the attachment of the 5S RNA into the large ribosomal subunit, where it forms part of the central protuberance. In the 70S ribosome it contacts protein S13 of the 30S subunit (bridge B1b), connecting the 2 subunits; this bridge is implicated in subunit movement. Contacts the P site tRNA; the 5S rRNA and some of its associated proteins might help stabilize positioning of ribosome-bound tRNAs. The protein is Large ribosomal subunit protein uL5 of Vibrio campbellii (strain ATCC BAA-1116).